The chain runs to 230 residues: Type II restriction enzyme MjaV (230 aa).

The catalysed reaction is Endonucleolytic cleavage of DNA to give specific double-stranded fragments with terminal 5'-phosphates.. In terms of biological role, a P subtype restriction enzyme that recognizes the double-stranded sequence 5'-GTAC-3'; the cleavage site is unknown. This chain is Type II restriction enzyme MjaV (mjaVR), found in Methanocaldococcus jannaschii (strain ATCC 43067 / DSM 2661 / JAL-1 / JCM 10045 / NBRC 100440) (Methanococcus jannaschii).